We begin with the raw amino-acid sequence, 525 residues long: MTKDAEVEEFLKRVEDLDGKINKPPIVKKKPQHLSTTPIENDDTLDGNLVYKSAFNYEKSFGSKKPVGVIGLDKEDDRKFLVSEEDYKLLQKIKMEQQQQHLSERHHRHIEPVRHIIPDRHSKPIFHNEPVIVREESEDEAPPLPSRNRASSENVVKSTTSAPPLLPRRRYKDDITAKKLDVVSDNVNSSNKIKEMSSISDKNKSKPPLPEKKTFLKSLEDNKLTTSNYKDQDKGPELKPTRNVDFLESVQLKSPPQSPSKMKTIEEKHFKLNSPKKDGFIVSVLSSEENSRSSLSEKPSNEGNYHLSGGLTTKAEKKKPVVPPKKDIKLKDIELEKVDKTGKGGDGKQIEPEFQKIVLNKRTPPPVSKRKPSIPEALLKAQNLSKNTENKKSVAQSKESIDMLPKLNKKGPPVPQRKVSMPEALKKLESMKNKNSTTENVQKDNGEESEISDSEPESINNKLESVLKRANTSGQIGSKHIGHLPPRAATTGDLLSKKEPHTTQSLSHPNKSRSRGPKRKLPTKI.

4 disordered regions span residues 21–40 (INKPPIVKKKPQHLSTTPIE), 98–262 (QQQH…PSKM), 285–325 (LSSE…VPPK), and 339–525 (DKTG…PTKI). Positions 110-122 (IEPVRHIIPDRHS) are enriched in basic and acidic residues. A compositionally biased stretch (polar residues) spans 148–162 (NRASSENVVKSTTSA). Composition is skewed to basic and acidic residues over residues 171-182 (YKDDITAKKLDV), 201-223 (DKNKSKPPLPEKKTFLKSLEDNK), and 230-242 (KDQDKGPELKPTR). Residues 251-261 (QLKSPPQSPSK) show a composition bias toward polar residues. A compositionally biased stretch (low complexity) spans 285–297 (LSSEENSRSSLSE). Basic and acidic residues-rich tracts occupy residues 314–325 (KAEKKKPVVPPK) and 339–354 (DKTGKGGDGKQIEPEF). A compositionally biased stretch (polar residues) spans 382 to 398 (QNLSKNTENKKSVAQSK). Acidic residues predominate over residues 447 to 456 (EESEISDSEP). Positions 510-525 (NKSRSRGPKRKLPTKI) are enriched in basic residues.

It localises to the cell membrane. The protein localises to the cytoplasm. Its subcellular location is the cytoskeleton. It is found in the actin patch. Functionally, cortical patch protein involved in endocytosis. The polypeptide is Protein BSP1 (BSP1) (Candida glabrata (strain ATCC 2001 / BCRC 20586 / JCM 3761 / NBRC 0622 / NRRL Y-65 / CBS 138) (Yeast)).